Consider the following 148-residue polypeptide: 3-hydroxyacyl-[acyl-carrier-protein] dehydratase FabZ (148 aa).

Residue His-47 is part of the active site.

The protein belongs to the thioester dehydratase family. FabZ subfamily.

Its subcellular location is the cytoplasm. It catalyses the reaction a (3R)-hydroxyacyl-[ACP] = a (2E)-enoyl-[ACP] + H2O. In terms of biological role, involved in unsaturated fatty acids biosynthesis. Catalyzes the dehydration of short chain beta-hydroxyacyl-ACPs and long chain saturated and unsaturated beta-hydroxyacyl-ACPs. In Hydrogenobaculum sp. (strain Y04AAS1), this protein is 3-hydroxyacyl-[acyl-carrier-protein] dehydratase FabZ.